The chain runs to 606 residues: UvrABC system protein C (606 aa).

Residues 18 to 96 enclose the GIY-YIG domain; it reads SQPGVYRMMN…IKSLNPRYNI (79 aa). A UVR domain is found at 205–240; that stretch reads TEVLKSITRKMHEAAEEQEYEQAALFRDQIQSLRKI.

The protein belongs to the UvrC family. As to quaternary structure, interacts with UvrB in an incision complex.

The protein localises to the cytoplasm. In terms of biological role, the UvrABC repair system catalyzes the recognition and processing of DNA lesions. UvrC both incises the 5' and 3' sides of the lesion. The N-terminal half is responsible for the 3' incision and the C-terminal half is responsible for the 5' incision. The protein is UvrABC system protein C of Nitrosospira multiformis (strain ATCC 25196 / NCIMB 11849 / C 71).